Consider the following 914-residue polypeptide: Protein translocase subunit SecA (914 aa).

Residues Gln86, 104–108 (GEGKT), and Asp512 each bind ATP. Residues Cys898, Cys900, Cys909, and His910 each contribute to the Zn(2+) site.

The protein belongs to the SecA family. As to quaternary structure, monomer and homodimer. Part of the essential Sec protein translocation apparatus which comprises SecA, SecYEG and auxiliary proteins SecDF-YajC and YidC. Requires Zn(2+) as cofactor.

The protein localises to the cell inner membrane. It is found in the cytoplasm. It catalyses the reaction ATP + H2O + cellular proteinSide 1 = ADP + phosphate + cellular proteinSide 2.. Its function is as follows. Part of the Sec protein translocase complex. Interacts with the SecYEG preprotein conducting channel. Has a central role in coupling the hydrolysis of ATP to the transfer of proteins into and across the cell membrane, serving both as a receptor for the preprotein-SecB complex and as an ATP-driven molecular motor driving the stepwise translocation of polypeptide chains across the membrane. The polypeptide is Protein translocase subunit SecA (Bordetella petrii (strain ATCC BAA-461 / DSM 12804 / CCUG 43448)).